The following is a 127-amino-acid chain: Glycine cleavage system H protein (127 aa).

A Lipoyl-binding domain is found at 24–105 (TALVGITDFA…YNEGWIVKMK (82 aa)). N6-lipoyllysine is present on Lys-65.

It belongs to the GcvH family. The glycine cleavage system is composed of four proteins: P, T, L and H. The cofactor is (R)-lipoate.

Its function is as follows. The glycine cleavage system catalyzes the degradation of glycine. The H protein shuttles the methylamine group of glycine from the P protein to the T protein. The polypeptide is Glycine cleavage system H protein (Chlorobaculum tepidum (strain ATCC 49652 / DSM 12025 / NBRC 103806 / TLS) (Chlorobium tepidum)).